Consider the following 1159-residue polypeptide: Calcium-activated potassium channel subunit alpha-1 (1159 aa).

Residues 1–24 (EPNMDALIIPVTMEVPCDSRGQRM) are Extracellular-facing. Residues 25-45 (WWAFLASSMVTFFGGLFIILL) form a helical membrane-spanning segment. Topologically, residues 46-116 (WRTLKYLWTV…MISAQTLTGR (71 aa)) are cytoplasmic. S-palmitoyl cysteine attachment occurs at residues Cys-56, Cys-57, and Cys-59. Residues 117–137 (VLVVLVFALSIGALVIYFIDS) form a helical membrane-spanning segment. Residues 138 to 152 (SNPIESCQNFYKDFT) are Extracellular-facing. The helical transmembrane segment at 153-173 (LQIDMAFNVFFLLYFGLRFIA) threads the bilayer. At 174–177 (ANDN) the chain is on the cytoplasmic side. The chain crosses the membrane as a helical span at residues 178–198 (LWFWLEVNSVVDFFTVPPVFV). Residues 199-202 (SVYL) are Extracellular-facing. Residues 203-223 (NRSWLGLRFLRALRLIQFSEI) traverse the membrane as a helical; Voltage-sensor segment. The Cytoplasmic portion of the chain corresponds to 224 to 238 (LQFLNILKTSNSIKL). The helical transmembrane segment at 239 to 259 (VNLLSIFISTWLTAAGFIHLV) threads the bilayer. The Extracellular portion of the chain corresponds to 260 to 273 (ENSGDPWENFQNSQ). The segment at residues 274 to 296 (ALTYWECVYLLMVTMSTVGYGDV) is an intramembrane region (pore-forming). A Selectivity for potassium motif is present at residues 290 to 293 (TVGY). Residues 297–305 (YAKTTPGGL) lie on the Extracellular side of the membrane. A helical transmembrane segment spans residues 306–326 (FIVFFILGGLAMFASYVPEII). Residues 327 to 1159 (EIIGNRKKYG…PPIREVEDEC (833 aa)) lie on the Cytoplasmic side of the membrane. An RCK N-terminal 1 domain is found at 345-487 (RKHIVVCGHI…WNWKEGDDAI (143 aa)). Residues Glu-377, Gln-400, and Glu-402 each coordinate Mg(2+). The tract at residues 494-514 (LGFIAQSCLAQGLSTMLANLF) is segment S7. Residues 551–571 (LSFPTVCELCFVKLKLLMIAI) form a segment S8 region. A heme-binding motif region spans residues 615 to 619 (CKACH). The segment at 639 to 668 (EQPSTLSPKKKQRNGGMRNSPSSSPKLMRH) is disordered. A Phosphothreonine modification is found at Thr-643. 3 positions are modified to phosphoserine: Ser-645, Ser-658, and Ser-662. Residues 717-737 (VLSGHVVVCIFGHVSSALIGL) are segment S9. The RCK N-terminal 2 domain maps to 719–863 (SGHVVVCIFG…MDKSSPDNSP (145 aa)). Thr-850 is modified (phosphothreonine). 2 positions are modified to phosphoserine: Ser-858 and Ser-862. The Calcium bowl signature appears at 883-905 (TELVNDTNVQFLDQDDDDDPDTE). Residues Gln-892, Asp-895, Asp-898, and Asp-900 each contribute to the Ca(2+) site. The tract at residues 912–932 (FACGTAFAVSVLDSLMSATYF) is segment S10. Residues 1066–1091 (RASLSHSSHSSQSSSKKSSSVHSIPS) show a composition bias toward low complexity. The interval 1066-1124 (RASLSHSSHSSQSSSKKSSSVHSIPSTANRQNRPKSRESRDKQTEKKWFTDEPDNAYPR) is disordered. A compositionally biased stretch (basic and acidic residues) spans 1100-1115 (KSRESRDKQTEKKWFT). Ser-1101 and Ser-1104 each carry phosphoserine.

This sequence belongs to the potassium channel family. Calcium-activated (TC 1.A.1.3) subfamily. KCa1.1/KCNMA1 sub-subfamily. As to quaternary structure, homotetramer; which constitutes the calcium-activated potassium channel. Interacts with beta subunits KCNMB1, KCNMB2, KCNMB3 and KCNMB4. Interacts with gamma subunits LRRC26, LRRC38, LRRC52 and LRRC55. Beta and gamma subunits are accessory, and modulate its activity. Interacts with RAB11B. Post-translationally, phosphorylated. Phosphorylation by kinases such as PKA and/or PKG. In smooth muscles, phosphorylation affects its activity. Palmitoylation by ZDHHC22 and ZDHHC23 within the intracellular linker between the S0 and S1 transmembrane domains regulates localization to the plasma membrane. Depalmitoylated by LYPLA1 and LYPLAL1, leading to retard exit from the trans-Golgi network. As to expression, expressed in all vascular and smooth muscles.

It localises to the cell membrane. The enzyme catalyses K(+)(in) = K(+)(out). With respect to regulation, ethanol and carbon monoxide-bound heme increase channel activation. Heme inhibits channel activation. Potassium channel activated by both membrane depolarization or increase in cytosolic Ca(2+) that mediates export of K(+). It is also activated by the concentration of cytosolic Mg(2+). Its activation dampens the excitatory events that elevate the cytosolic Ca(2+) concentration and/or depolarize the cell membrane. It therefore contributes to repolarization of the membrane potential. Plays a key role in controlling excitability in a number of systems, such as regulation of the contraction of smooth muscle, the tuning of hair cells in the cochlea, regulation of transmitter release, and innate immunity. In smooth muscles, its activation by high level of Ca(2+), caused by ryanodine receptors in the sarcoplasmic reticulum, regulates the membrane potential. In cochlea cells, its number and kinetic properties partly determine the characteristic frequency of each hair cell and thereby helps to establish a tonotopic map. Kinetics of KCNMA1 channels are determined by alternative splicing, phosphorylation status and its combination with modulating beta subunits. Highly sensitive to both iberiotoxin (IbTx) and charybdotoxin (CTX). The chain is Calcium-activated potassium channel subunit alpha-1 (KCNMA1) from Canis lupus familiaris (Dog).